The following is a 443-amino-acid chain: Thymidine phosphorylase (443 aa).

The protein belongs to the thymidine/pyrimidine-nucleoside phosphorylase family. Homodimer.

It carries out the reaction thymidine + phosphate = 2-deoxy-alpha-D-ribose 1-phosphate + thymine. It functions in the pathway pyrimidine metabolism; dTMP biosynthesis via salvage pathway; dTMP from thymine: step 1/2. Functionally, the enzymes which catalyze the reversible phosphorolysis of pyrimidine nucleosides are involved in the degradation of these compounds and in their utilization as carbon and energy sources, or in the rescue of pyrimidine bases for nucleotide synthesis. The protein is Thymidine phosphorylase of Shewanella putrefaciens (strain CN-32 / ATCC BAA-453).